The following is a 397-amino-acid chain: Elongation factor Tu 2 (397 aa).

One can recognise a tr-type G domain in the interval 10 to 206; sequence KPHVNIGTIG…AIDTWIPEPV (197 aa). The tract at residues 19 to 26 is G1; it reads GHVDHGKT. 19 to 26 is a binding site for GTP; the sequence is GHVDHGKT. Residue Thr-26 coordinates Mg(2+). Residues 61 to 65 form a G2 region; sequence GITIS. The segment at 82–85 is G3; the sequence is DCPG. GTP-binding positions include 82-86 and 137-140; these read DCPGH and NKCD. Residues 137–140 form a G4 region; sequence NKCD. Positions 175 to 177 are G5; that stretch reads SAL.

This sequence belongs to the TRAFAC class translation factor GTPase superfamily. Classic translation factor GTPase family. EF-Tu/EF-1A subfamily. Monomer.

It localises to the cytoplasm. It catalyses the reaction GTP + H2O = GDP + phosphate + H(+). Its function is as follows. GTP hydrolase that promotes the GTP-dependent binding of aminoacyl-tRNA to the A-site of ribosomes during protein biosynthesis. This chain is Elongation factor Tu 2, found in Alkaliphilus metalliredigens (strain QYMF).